The chain runs to 292 residues: Phosphatidylserine decarboxylase proenzyme (292 aa).

Catalysis depends on charge relay system; for autoendoproteolytic cleavage activity residues Asp-89, His-146, and Ser-252. The active-site Schiff-base intermediate with substrate; via pyruvic acid; for decarboxylase activity is Ser-252. Ser-252 carries the pyruvic acid (Ser); by autocatalysis modification.

It belongs to the phosphatidylserine decarboxylase family. PSD-B subfamily. Prokaryotic type I sub-subfamily. Heterodimer of a large membrane-associated beta subunit and a small pyruvoyl-containing alpha subunit. Requires pyruvate as cofactor. In terms of processing, is synthesized initially as an inactive proenzyme. Formation of the active enzyme involves a self-maturation process in which the active site pyruvoyl group is generated from an internal serine residue via an autocatalytic post-translational modification. Two non-identical subunits are generated from the proenzyme in this reaction, and the pyruvate is formed at the N-terminus of the alpha chain, which is derived from the carboxyl end of the proenzyme. The autoendoproteolytic cleavage occurs by a canonical serine protease mechanism, in which the side chain hydroxyl group of the serine supplies its oxygen atom to form the C-terminus of the beta chain, while the remainder of the serine residue undergoes an oxidative deamination to produce ammonia and the pyruvoyl prosthetic group on the alpha chain. During this reaction, the Ser that is part of the protease active site of the proenzyme becomes the pyruvoyl prosthetic group, which constitutes an essential element of the active site of the mature decarboxylase.

The protein localises to the cell membrane. The catalysed reaction is a 1,2-diacyl-sn-glycero-3-phospho-L-serine + H(+) = a 1,2-diacyl-sn-glycero-3-phosphoethanolamine + CO2. The protein operates within phospholipid metabolism; phosphatidylethanolamine biosynthesis; phosphatidylethanolamine from CDP-diacylglycerol: step 2/2. In terms of biological role, catalyzes the formation of phosphatidylethanolamine (PtdEtn) from phosphatidylserine (PtdSer). This chain is Phosphatidylserine decarboxylase proenzyme, found in Shewanella sp. (strain MR-4).